Reading from the N-terminus, the 521-residue chain is Cytochrome P450 52A9 (521 aa).

Cysteine 468 contacts heme.

This sequence belongs to the cytochrome P450 family. Heme is required as a cofactor.

The protein resides in the membrane. In terms of biological role, together with an NADPH cytochrome P450 the enzyme system catalyzes the terminal hydroxylation as the first step in the assimilation of alkanes and fatty acids. In Candida maltosa (Yeast), this protein is Cytochrome P450 52A9 (CYP52A9).